A 455-amino-acid chain; its full sequence is DNA repair protein RadA (455 aa).

A C4-type zinc finger spans residues 11–28 (CVGCGYVHPKWLGRCPEC). 97–104 (GEPGIGKS) lines the ATP pocket. A RadA KNRFG motif motif is present at residues 250–254 (KNRFG). The lon-protease-like stretch occupies residues 350–455 (DIYVNVAGGI…IAEIFSKAKA (106 aa)).

It belongs to the RecA family. RadA subfamily.

Functionally, DNA-dependent ATPase involved in processing of recombination intermediates, plays a role in repairing DNA breaks. Stimulates the branch migration of RecA-mediated strand transfer reactions, allowing the 3' invading strand to extend heteroduplex DNA faster. Binds ssDNA in the presence of ADP but not other nucleotides, has ATPase activity that is stimulated by ssDNA and various branched DNA structures, but inhibited by SSB. Does not have RecA's homology-searching function. This chain is DNA repair protein RadA, found in Treponema pallidum (strain Nichols).